Reading from the N-terminus, the 253-residue chain is Bridging integrator 3 (253 aa).

The 224-residue stretch at 9 to 232 (GQPKKQIVSK…LDQPGHSDEH (224 aa)) folds into the BAR domain. Coiled-coil stretches lie at residues 16–57 (VSKT…AMSK) and 120–151 (SLNM…KEKT).

The protein resides in the cytoplasm. Its subcellular location is the cytoskeleton. Involved in cytokinesis and septation where it has a role in the localization of F-actin. This chain is Bridging integrator 3 (Bin3), found in Rattus norvegicus (Rat).